The chain runs to 196 residues: Molybdenum cofactor guanylyltransferase (196 aa).

GTP contacts are provided by residues Leu-10–Gly-12, Lys-23, Asn-51, Asp-69, and Asp-99. A Mg(2+)-binding site is contributed by Asp-99.

This sequence belongs to the MobA family. In terms of assembly, monomer. Mg(2+) serves as cofactor.

The protein localises to the cytoplasm. The catalysed reaction is Mo-molybdopterin + GTP + H(+) = Mo-molybdopterin guanine dinucleotide + diphosphate. Functionally, transfers a GMP moiety from GTP to Mo-molybdopterin (Mo-MPT) cofactor (Moco or molybdenum cofactor) to form Mo-molybdopterin guanine dinucleotide (Mo-MGD) cofactor. The polypeptide is Molybdenum cofactor guanylyltransferase (Shewanella sediminis (strain HAW-EB3)).